The following is a 274-amino-acid chain: Outer surface protein A (274 aa).

Positions 1 to 16 are cleaved as a signal peptide; it reads MKKYLLGIGLILALIA. Residue Cys-17 is the site of N-palmitoyl cysteine attachment. Cys-17 carries the S-diacylglycerol cysteine lipid modification.

The protein belongs to the OspA lipoprotein family.

The protein resides in the cell outer membrane. Its subcellular location is the cell surface. This is Outer surface protein A from Borreliella burgdorferi (Lyme disease spirochete).